Consider the following 118-residue polypeptide: Large ribosomal subunit protein bL20 (118 aa).

The protein belongs to the bacterial ribosomal protein bL20 family.

In terms of biological role, binds directly to 23S ribosomal RNA and is necessary for the in vitro assembly process of the 50S ribosomal subunit. It is not involved in the protein synthesizing functions of that subunit. This chain is Large ribosomal subunit protein bL20, found in Oceanobacillus iheyensis (strain DSM 14371 / CIP 107618 / JCM 11309 / KCTC 3954 / HTE831).